An 84-amino-acid polypeptide reads, in one-letter code: UPF0410 protein YmgE (84 aa).

A run of 3 helical transmembrane segments spans residues 1 to 21 (MGIIAWIIFDLIAGIIAKLIM), 27 to 47 (GGFFLTCILGIVGAVVGGWLA), and 58 to 78 (GFNLHSFLVAVVGAILVLGIF).

The protein belongs to the UPF0410 family.

It is found in the cell inner membrane. The sequence is that of UPF0410 protein YmgE (ymgE) from Escherichia coli (strain K12).